The following is a 118-amino-acid chain: Putative membrane protein insertion efficiency factor (118 aa).

The disordered stretch occupies residues 76–118 (WDPVPQRRPRRRDAAAADAAMSAPHACKGSPHAVVGDTNDGST). Low complexity predominate over residues 91–101 (AADAAMSAPHA).

It belongs to the UPF0161 family.

Its subcellular location is the cell membrane. Its function is as follows. Could be involved in insertion of integral membrane proteins into the membrane. The chain is Putative membrane protein insertion efficiency factor from Nocardia farcinica (strain IFM 10152).